The primary structure comprises 505 residues: RNA-splicing ligase RtcB homolog (505 aa).

Mn(2+) contacts are provided by D119, C122, H227, and H259. Residue 226–230 (NHYAE) coordinates GMP. S300 is modified (phosphoserine). H353 is a Mn(2+) binding site. GMP contacts are provided by residues 353–354 (HN), 402–405 (GGTM), S409, and 428–431 (HGAG). H428 serves as the catalytic GMP-histidine intermediate. Residue K496 forms a Glycyl lysine isopeptide (Lys-Gly) (interchain with G-Cter in SUMO2) linkage. K504 is a binding site for GMP.

The protein belongs to the RtcB family. As to quaternary structure, catalytic component of the tRNA-splicing ligase complex. Mn(2+) is required as a cofactor.

The protein resides in the nucleus. It localises to the cytoplasm. The enzyme catalyses a 3'-end 3'-phospho-ribonucleotide-RNA + a 5'-end dephospho-ribonucleoside-RNA + GTP = a ribonucleotidyl-ribonucleotide-RNA + GMP + diphosphate. It catalyses the reaction a 3'-end 2',3'-cyclophospho-ribonucleotide-RNA + a 5'-end dephospho-ribonucleoside-RNA + GTP + H2O = a ribonucleotidyl-ribonucleotide-RNA + GMP + diphosphate + H(+). Functionally, catalytic subunit of the tRNA-splicing ligase complex that acts by directly joining spliced tRNA halves to mature-sized tRNAs by incorporating the precursor-derived splice junction phosphate into the mature tRNA as a canonical 3',5'-phosphodiester. May act as an RNA ligase with broad substrate specificity, and may function toward other RNAs. This Macaca fascicularis (Crab-eating macaque) protein is RNA-splicing ligase RtcB homolog.